Here is an 82-residue protein sequence, read N- to C-terminus: Small ribosomal subunit protein uS12 (82 aa).

3-methylthioaspartic acid is present on Asp59.

Belongs to the universal ribosomal protein uS12 family. As to quaternary structure, part of the 30S ribosomal subunit. Contacts proteins S8 and S17. May interact with IF1 in the 30S initiation complex.

Functionally, with S4 and S5 plays an important role in translational accuracy. Its function is as follows. Interacts with and stabilizes bases of the 16S rRNA that are involved in tRNA selection in the A site and with the mRNA backbone. Located at the interface of the 30S and 50S subunits, it traverses the body of the 30S subunit contacting proteins on the other side and probably holding the rRNA structure together. The combined cluster of proteins S8, S12 and S17 appears to hold together the shoulder and platform of the 30S subunit. The chain is Small ribosomal subunit protein uS12 (rpsL) from Actinobacillus pleuropneumoniae (Haemophilus pleuropneumoniae).